A 178-amino-acid polypeptide reads, in one-letter code: Female-specific protein transformer (178 aa).

Basic and acidic residues-rich tracts occupy residues 1–18 (MKMD…DSHG) and 25–40 (RERE…DSKK). Residues 1-117 (MKMDADSSCG…RRYNPPPKII (117 aa)) form a disordered region. 2 stretches are compositionally biased toward basic residues: residues 59–73 (RRLR…RRSA) and 81–108 (RRHR…RSPR).

The protein resides in the nucleus speckle. Member of the regulatory pathway controlling female somatic sexual differentiation, regulated by Sxl. Activates dsx female-specific splicing by promoting the formation of a splicing enhancer complex which consists of tra, tra2 and sr proteins. In Drosophila erecta (Fruit fly), this protein is Female-specific protein transformer (tra).